The primary structure comprises 396 residues: Elongation factor Tu (396 aa).

Residues 10-206 form the tr-type G domain; sequence KPHCNIGTIG…AVDAYIPQPE (197 aa). A G1 region spans residues 19 to 26; the sequence is GHVDHGKT. Residue 19-26 coordinates GTP; that stretch reads GHVDHGKT. Mg(2+) is bound at residue T26. The G2 stretch occupies residues 60–64; it reads GITIS. The segment at 81 to 84 is G3; sequence DCPG. GTP is bound by residues 81 to 85 and 136 to 139; these read DCPGH and NKVD. Positions 136–139 are G4; sequence NKVD. A G5 region spans residues 174 to 176; sequence SAL.

It belongs to the TRAFAC class translation factor GTPase superfamily. Classic translation factor GTPase family. EF-Tu/EF-1A subfamily. Monomer.

It localises to the cytoplasm. It carries out the reaction GTP + H2O = GDP + phosphate + H(+). In terms of biological role, GTP hydrolase that promotes the GTP-dependent binding of aminoacyl-tRNA to the A-site of ribosomes during protein biosynthesis. This is Elongation factor Tu from Granulibacter bethesdensis (strain ATCC BAA-1260 / CGDNIH1).